The sequence spans 139 residues: Nucleoside diphosphate kinase (139 aa).

Residues Lys-12, Phe-60, Arg-88, Thr-94, Arg-105, and Asn-115 each coordinate ATP. His-118 serves as the catalytic Pros-phosphohistidine intermediate.

This sequence belongs to the NDK family. As to quaternary structure, homotetramer. Requires Mg(2+) as cofactor.

Its subcellular location is the cytoplasm. The catalysed reaction is a 2'-deoxyribonucleoside 5'-diphosphate + ATP = a 2'-deoxyribonucleoside 5'-triphosphate + ADP. The enzyme catalyses a ribonucleoside 5'-diphosphate + ATP = a ribonucleoside 5'-triphosphate + ADP. In terms of biological role, major role in the synthesis of nucleoside triphosphates other than ATP. The ATP gamma phosphate is transferred to the NDP beta phosphate via a ping-pong mechanism, using a phosphorylated active-site intermediate. The polypeptide is Nucleoside diphosphate kinase (Caldanaerobacter subterraneus subsp. tengcongensis (strain DSM 15242 / JCM 11007 / NBRC 100824 / MB4) (Thermoanaerobacter tengcongensis)).